Here is a 505-residue protein sequence, read N- to C-terminus: RNA-splicing ligase RtcB homolog (505 aa).

The Mn(2+) site is built by aspartate 119, cysteine 122, histidine 227, and histidine 259. 226 to 230 (NHYAE) is a GMP binding site. Serine 300 carries the post-translational modification Phosphoserine. Position 353 (histidine 353) interacts with Mn(2+). GMP contacts are provided by residues 353–354 (HN), 402–405 (GGTM), serine 409, and 428–431 (HGAG). Residue histidine 428 is the GMP-histidine intermediate of the active site. A Glycyl lysine isopeptide (Lys-Gly) (interchain with G-Cter in SUMO2) cross-link involves residue lysine 496. Lysine 504 serves as a coordination point for GMP.

The protein belongs to the RtcB family. In terms of assembly, catalytic component of the tRNA-splicing ligase complex. The cofactor is Mn(2+).

It is found in the nucleus. Its subcellular location is the cytoplasm. It carries out the reaction a 3'-end 3'-phospho-ribonucleotide-RNA + a 5'-end dephospho-ribonucleoside-RNA + GTP = a ribonucleotidyl-ribonucleotide-RNA + GMP + diphosphate. It catalyses the reaction a 3'-end 2',3'-cyclophospho-ribonucleotide-RNA + a 5'-end dephospho-ribonucleoside-RNA + GTP + H2O = a ribonucleotidyl-ribonucleotide-RNA + GMP + diphosphate + H(+). Functionally, catalytic subunit of the tRNA-splicing ligase complex that acts by directly joining spliced tRNA halves to mature-sized tRNAs by incorporating the precursor-derived splice junction phosphate into the mature tRNA as a canonical 3',5'-phosphodiester. May act as an RNA ligase with broad substrate specificity, and may function toward other RNAs. This is RNA-splicing ligase RtcB homolog from Rattus norvegicus (Rat).